The following is a 220-amino-acid chain: uncharacterized protein (220 aa).

Residues 10–30 form a helical membrane-spanning segment; sequence FFIIGGVILSIGLILFFLLGF.

It localises to the membrane. This is an uncharacterized protein from Methanocaldococcus jannaschii (strain ATCC 43067 / DSM 2661 / JAL-1 / JCM 10045 / NBRC 100440) (Methanococcus jannaschii).